The primary structure comprises 899 residues: Inositol 1,4,5-triphosphate receptor associated 1 (899 aa).

Disordered regions lie at residues 32-110 (PGTH…HRHL), 164-286 (RRGR…PLQH), 324-391 (KTAR…EEPG), and 463-486 (AAEQ…SKSG). Residues 100–110 (SPHRRLSHRHL) show a composition bias toward basic residues. Phosphoserine is present on Ser-106. The interaction with PRKG1 stretch occupies residues 140–172 (SEEDKKKNLALLEEAKLVSERFLTRRGRKSRSS). Over residues 171-180 (SSLGDSPSAV) the composition is skewed to polar residues. Residues 181–203 (SPNLSSGASPASSRSCSLTISTS) are compositionally biased toward low complexity. The span at 266–281 (TVEKTKELTVEQKENF) shows a compositional bias: basic and acidic residues. Over residues 333 to 351 (PRTTAQGSGGTVSPHSLGQ) the composition is skewed to polar residues. The residue at position 382 (Ser-382) is a Phosphoserine. Residues 521–567 (NVFVQLSLAFRNDSYTLESRINQAERERNLTEENTEKELENFKASIT) are interaction with ITPR1. The stretch at 534–632 (SYTLESRINQ…MQYVENLKRT (99 aa)) forms a coiled coil. Phosphoserine occurs at positions 670 and 683. 2 disordered regions span residues 695–722 (LPGQ…SSIS) and 757–818 (TSQE…DQGS). Residues 699-715 (APSSSPMPSLPALSESS) show a composition bias toward low complexity. Basic and acidic residues-rich tracts occupy residues 759–770 (QETKAKAEEEAY) and 777–787 (GVKKTEELQDL). The segment covering 788-814 (KEEEEEEQKTESPEEPEEVEETQEDEK) has biased composition (acidic residues). Residues 839 to 859 (WQVIWMMAAVMLVLSVVLGLY) traverse the membrane as a helical segment. Positions 867–899 (EEADGPPGRSTCSAAQRDSWWSSGLQQELPAEQ) are disordered. A compositionally biased stretch (polar residues) spans 876–892 (STCSAAQRDSWWSSGLQ).

As to quaternary structure, part of cGMP kinase signaling complex at least composed of ACTA2/alpha-actin, CNN1/calponin H1, PLN/phospholamban, PRKG1 and ITPR1. Interacts with PRKG1/cGKI-beta and ITPR1/IP3R type I. Interacts with HCN4; regulates HCN4 channel activity. In terms of processing, phosphorylated by PRKG1/cGKI. As to expression, highly expressed in smooth muscle such as aorta, colon and uterus. Detected in the brain, in the thalamus, in the hippocampus and myenteric plexus. Highly expressed in megakaryocytes. Down-regulated during macrophage differentiation.

The protein resides in the membrane. It is found in the cytoplasm. It localises to the perinuclear region. The protein localises to the sarcoplasmic reticulum. Its function is as follows. Plays a role as NO/PRKG1-dependent regulator of IP3-induced calcium release; its phosphorylation by PRKG1 inhibits bradykinin and IP3-induced calcium release from intracellular stores. Recruits PRKG1 to the endoplasmic reticulum and may mediate the assembly of PRKG1 and ITPR1 in a macrocomplex. Involved in PRKG1 signaling cascade leading to inhibition of platelet activation and aggregation. Also mediates NO-dependent inhibition of calcium signaling in gastrointestinal smooth muscle contributing to NO-dependent relaxation. Plays a role in the regulation of cellular excitability by regulating the hyperpolarization-activated cyclic nucleotide-gated HCN4 channel activity. The polypeptide is Inositol 1,4,5-triphosphate receptor associated 1 (Irag1) (Mus musculus (Mouse)).